Consider the following 5233-residue polypeptide: E3 ubiquitin-protein ligase highwire (5233 aa).

A disordered region spans residues 197–230; it reads VVGGPGLPAEKRPRRDSANSDADSDTEEPTEREP. Residues 205–214 show a composition bias toward basic and acidic residues; sequence AEKRPRRDSA. Phosphoserine occurs at positions 213 and 216. 3 RCC1 repeats span residues 615–666, 669–724, and 768–818; these read NGRV…ALLV, DGTV…FVTK, and KGQL…DKRL. A disordered region spans residues 680-700; sequence RGEDGDSSKNRRQPKAVKPKK. The span at 689–700 shows a compositional bias: basic residues; that stretch reads NRRQPKAVKPKK. Residues 900–950 form a disordered region; it reads TELKPPPSDVQQRQQRSKTLIMRRKERKGELETGAAGGGAATPTDLDKDPP. Over residues 908–917 the composition is skewed to polar residues; that stretch reads DVQQRQQRSK. RCC1 repeat units follow at residues 931 to 983, 984 to 1033, and 1035 to 1084; these read ETGA…VLTL, AGEV…LLTS, and GMVY…TVAP. 2 disordered regions span residues 1051–1109 and 1287–1327; these read LPSD…EMPP and AAAA…PPQL. Polar residues predominate over residues 1092-1103; sequence RSQSPANVQPSG. Residues 1287–1302 are compositionally biased toward low complexity; that stretch reads AAAAAVAAPGTPVSAG. Residues 1436–1587 form a PHR domain 1 region; it reads NRFDNFGGGW…GQIPAILYRL (152 aa). A disordered region spans residues 1681–1718; that stretch reads SSTSVATGGGSNAAHGSGVVTTAKSVQSKPNKDKNTPR. The span at 1699-1709 shows a compositional bias: polar residues; that stretch reads VVTTAKSVQSK. The segment at 2014 to 2169 is PHR domain 2; sequence ARFARCDVSR…GQLPCILYYS (156 aa). Disordered regions lie at residues 2329–2353 and 2580–2604; these read SADLRNGQSQSVSQSQSQSQSVPIN and NGAGDRRRNTGGGIAGSGAAPNTHQ. The segment covering 2336-2350 has biased composition (low complexity); sequence QSQSVSQSQSQSQSV. Residues 2885–4082 are required for interaction with Rae1; it reads AEVSAPGPNL…FVSSLNPTGG (1198 aa). The stretch at 2906–3000 is one Filamin repeat; that stretch reads WGGMAPPPRI…LEEVYRVDVK (95 aa). 6 disordered regions span residues 3005 to 3024, 3117 to 3210, 3277 to 3333, 3348 to 3378, 3551 to 3587, and 3901 to 3936; these read PPPTQRNSAQRRPQAPSKLR, KGVG…EPEQ, GGQD…ASET, TTTGQGEQQSELQLATTSTASSASKRNPMGP, PRLLSPGSRDLNGDADTEGKEGKNSDQASAGEKDLGR, and ASLAQHNHPPPHHPQQQHHQQQQMNLQLQQHQAPPV. Basic and acidic residues predominate over residues 3176-3191; sequence KHADLAEREAQVQEER. The span at 3192–3210 shows a compositional bias: acidic residues; it reads EKEEEQVDDEDADDREPEQ. The span at 3282–3292 shows a compositional bias: polar residues; it reads PRGNGNRSQQE. Residues 3348–3371 show a composition bias toward low complexity; that stretch reads TTTGQGEQQSELQLATTSTASSAS. The segment covering 3917 to 3932 has biased composition (low complexity); the sequence is QHHQQQQMNLQLQQHQ. A DOC domain is found at 4195-4374; that stretch reads HNQVHSVATG…KHQPHLRLSH (180 aa). Disordered stretches follow at residues 4633–4655 and 4680–4702; these read ASTGPSGSGGVSGSSSGNGGAVL and LRSRPPTGEPGTTDPFQFDALPP. The span at 4638–4652 shows a compositional bias: gly residues; sequence SGSGGVSGSSSGNGG. Zn(2+) contacts are provided by cysteine 4991, cysteine 4994, cysteine 5009, histidine 5011, histidine 5014, cysteine 5017, cysteine 5038, cysteine 5041, cysteine 5101, and cysteine 5104. The segment at 4991–5042 adopts an RING-type; atypical zinc-finger fold; that stretch reads CMICFVEALSCAPSIHLECGHVFHYHCCKAVLEKRWSGPRITFGFSLCPICK. The interval 5096–5231 is tandem cysteine domain; that stretch reads YAYYVCFKCQ…LGCGVCRNAQ (136 aa). Cysteine 5115 is an active-site residue. Zn(2+) is bound by residues cysteine 5130, cysteine 5133, cysteine 5142, histidine 5145, cysteine 5154, cysteine 5157, and cysteine 5158. Cysteine 5165 is a catalytic residue. Zn(2+)-binding residues include cysteine 5172, cysteine 5175, cysteine 5193, cysteine 5207, histidine 5213, cysteine 5224, and cysteine 5227.

Belongs to the RING-Cys relay (RCR) family. As to quaternary structure, component of an E3 ubiquitin ligase complex composed of hiw, Rae1 and Fsn. Interacts with Rae1; the interaction with Rae1 may protect hiw from autophagy-mediated degradation. Express throughout the nervous system. Stage 13 embryos show expression in the central nervous system (CNS) at the longitudinal axon tracts around which the synaptic neuropil forms. Expression outside the CNS starts at stage 16 in presynaptic terminals at the periactive zone which surround the active zone. Expression at neuromuscular junctions (NMJ) and in the CNS is also seen in third instar larvae (at protein level).

The protein localises to the synapse. It is found in the cell projection. Its subcellular location is the axon. It catalyses the reaction [E2 ubiquitin-conjugating enzyme]-S-ubiquitinyl-L-cysteine + [acceptor protein]-L-threonine = [E2 ubiquitin-conjugating enzyme]-L-cysteine + [acceptor protein]-3-O-ubiquitinyl-L-threonine.. It functions in the pathway protein modification; protein ubiquitination. Atypical E3 ubiquitin-protein ligase which specifically mediates ubiquitination of threonine and serine residues on target proteins, instead of ubiquitinating lysine residues. Shows esterification activity towards both threonine and serine, with a preference for threonine, and acts via two essential catalytic cysteine residues that relay ubiquitin to its substrate via thioester intermediates. Required in the presynaptic motoneuron to down-regulate the levels of wnd and restrain synaptic terminal growth at the neuromuscular junction (NMJ) together with Rae1 and Fsn. This Drosophila melanogaster (Fruit fly) protein is E3 ubiquitin-protein ligase highwire.